Here is an 884-residue protein sequence, read N- to C-terminus: Putative GTP diphosphokinase RSH1, chloroplastic (884 aa).

The transit peptide at 1-55 (MTSASSMSVSVECVNICNLTKGDGNARSDCSALSCAWKAPRALTGFLASTAHPPV) directs the protein to the chloroplast. One can recognise an HD domain in the interval 172-279 (FIIHPVAVAR…VKLADRLHNM (108 aa)). A TGS domain is found at 563 to 626 (LGSRVFVFTP…ENAEVVEIVT (64 aa)). Positions 711–727 (QSQDKSRDTTPAPQNGS) are enriched in polar residues. The segment at 711 to 747 (QSQDKSRDTTPAPQNGSVWAPKVNGKHNKAIKNSSSD) is disordered. In terms of domain architecture, ACT spans 797–868 (WLCVVSMDRK…LVLGVLGWSS (72 aa)).

Belongs to the RelA/SpoT family. In terms of assembly, interacts with RPP4. Interacts with RPP5. As to expression, expressed in hypocotyls, shoots, cotyledons, rosette leaves, sepals and pistils.

The protein localises to the plastid. It localises to the chloroplast. It catalyses the reaction GTP + ATP = guanosine 3'-diphosphate 5'-triphosphate + AMP. Its function is as follows. May be involved in a rapid plant ppGpp (guanosine 3'-diphosphate 5'-diphosphate)-mediated response to pathogens and other stresses. Unable to functionally complement E.coli relA mutants. The chain is Putative GTP diphosphokinase RSH1, chloroplastic (RSH1) from Arabidopsis thaliana (Mouse-ear cress).